Reading from the N-terminus, the 416-residue chain is Imidazolonepropionase (416 aa).

Residues His82 and His84 each coordinate Fe(3+). Zn(2+) is bound by residues His82 and His84. Positions 91, 154, and 187 each coordinate 4-imidazolone-5-propanoate. Position 154 (Tyr154) interacts with N-formimidoyl-L-glutamate. His252 serves as a coordination point for Fe(3+). Residue His252 coordinates Zn(2+). Glu255 provides a ligand contact to 4-imidazolone-5-propanoate. Residue Asp326 coordinates Fe(3+). Residue Asp326 coordinates Zn(2+). Residues Asn328 and Gly330 each coordinate N-formimidoyl-L-glutamate. Ser331 contributes to the 4-imidazolone-5-propanoate binding site.

This sequence belongs to the metallo-dependent hydrolases superfamily. HutI family. Requires Zn(2+) as cofactor. It depends on Fe(3+) as a cofactor.

It is found in the cytoplasm. It carries out the reaction 4-imidazolone-5-propanoate + H2O = N-formimidoyl-L-glutamate. It participates in amino-acid degradation; L-histidine degradation into L-glutamate; N-formimidoyl-L-glutamate from L-histidine: step 3/3. Functionally, catalyzes the hydrolytic cleavage of the carbon-nitrogen bond in imidazolone-5-propanoate to yield N-formimidoyl-L-glutamate. It is the third step in the universal histidine degradation pathway. This is Imidazolonepropionase from Parabacteroides distasonis (strain ATCC 8503 / DSM 20701 / CIP 104284 / JCM 5825 / NCTC 11152).